The following is a 469-amino-acid chain: Repressible acid phosphatase (469 aa).

The N-terminal stretch at M1–A16 is a signal peptide. N23 and N31 each carry an N-linked (GlcNAc...) asparagine glycan. H77 functions as the Nucleophile in the catalytic mechanism. N129, N201, N229, N250, and N317 each carry an N-linked (GlcNAc...) asparagine glycan. The active-site Proton donor is the D340. 2 N-linked (GlcNAc...) asparagine glycosylation sites follow: N392 and N447.

This sequence belongs to the histidine acid phosphatase family. Post-translationally, glycosylated during secretion across the membrane.

Its subcellular location is the secreted. The catalysed reaction is a phosphate monoester + H2O = an alcohol + phosphate. The sequence is that of Repressible acid phosphatase (PHO5) from Kluyveromyces lactis (strain ATCC 8585 / CBS 2359 / DSM 70799 / NBRC 1267 / NRRL Y-1140 / WM37) (Yeast).